Here is a 317-residue protein sequence, read N- to C-terminus: Non-structural protein 2 (317 aa).

ATP contacts are provided by residues 107-109 (SVR), K188, and 221-223 (HGK). Positions 205 to 241 (LIAELRWQYNKFAVITHGKGHYRVVKYSSVANHADRV) are RNA-binding. H225 serves as the catalytic For NTPase and RTPase activities. R227 contributes to the ATP binding site.

The protein belongs to the rotavirus NSP2 family. Homooctamer. Interacts with VP1; this interaction is weak. Interacts with NSP5; this interaction leads to up-regulation of NSP5 phosphorylation and formation of viral factories. Interacts with host DCP1A, DCP1B, DDX6, EDC4 and EIF2S1/eIF2-alpha; these interactions are probably part of the sequestration of some host SGs and PBs proteins in viral factories. It depends on Mg(2+) as a cofactor.

The protein localises to the host cytoplasm. Its function is as follows. Participates in replication and packaging of the viral genome. Plays a crucial role, together with NSP5, in the formation of virus factories (viroplasms), which are large inclusions in the host cytoplasm where replication intermediates are assembled and viral RNA replication takes place. Displays ssRNA binding, NTPase, RNA triphosphatase (RTPase) and ATP-independent helix-unwinding activities. The unwinding activity may prepare and organize plus-strand RNAs for packaging and replication by removing interfering secondary structures. The RTPase activity plays a role in the removal of the gamma-phosphate from the rotavirus RNA minus strands of dsRNA genome segments. Participates in the selective exclusion of host proteins from stress granules (SG) and P bodies (PB). Also participates in the sequestration of these remodeled organelles in viral factories. The protein is Non-structural protein 2 of Bos taurus (Bovine).